The primary structure comprises 199 residues: 5'-deoxynucleotidase KPK_1466 (199 aa).

Substrate is bound by residues 18 to 19 (RW) and H33. One can recognise an HD domain in the interval 30–142 (VSEHSLQVAM…VKQADALCAY (113 aa)). H33, H68, and D69 together coordinate a divalent metal cation. Residues D69, 77 to 80 (DLPT), and D137 each bind substrate. D137 provides a ligand contact to a divalent metal cation.

Belongs to the 5DNU family. As to quaternary structure, homodimer. A divalent metal cation serves as cofactor.

The protein localises to the cytoplasm. It catalyses the reaction a 2'-deoxyribonucleoside 5'-phosphate + H2O = a 2'-deoxyribonucleoside + phosphate. Its function is as follows. Catalyzes the strictly specific dephosphorylation of 2'-deoxyribonucleoside 5'-monophosphates. The chain is 5'-deoxynucleotidase KPK_1466 from Klebsiella pneumoniae (strain 342).